A 203-amino-acid chain; its full sequence is Glycerol-3-phosphate acyltransferase (203 aa).

4 helical membrane passes run 6-26, 82-102, 118-138, and 141-161; these read LTLLMIVSAYLAGSISSAVLV, AISLGLIAIAACLGHIYPIFF, APIGDDLAICLMASWVVLLLI, and YSSLAAIITALLAPLYTWWLD.

The protein belongs to the PlsY family. In terms of assembly, probably interacts with PlsX.

The protein resides in the cell inner membrane. It catalyses the reaction an acyl phosphate + sn-glycerol 3-phosphate = a 1-acyl-sn-glycero-3-phosphate + phosphate. It participates in lipid metabolism; phospholipid metabolism. In terms of biological role, catalyzes the transfer of an acyl group from acyl-phosphate (acyl-PO(4)) to glycerol-3-phosphate (G3P) to form lysophosphatidic acid (LPA). This enzyme utilizes acyl-phosphate as fatty acyl donor, but not acyl-CoA or acyl-ACP. The protein is Glycerol-3-phosphate acyltransferase of Shewanella putrefaciens (strain CN-32 / ATCC BAA-453).